Here is a 266-residue protein sequence, read N- to C-terminus: 4-hydroxy-tetrahydrodipicolinate reductase (266 aa).

Position 10-15 (10-15 (GPRGRM)) interacts with NAD(+). Lysine 38 contributes to the NADP(+) binding site. Residues 99 to 101 (GTT) and 125 to 128 (APNF) each bind NAD(+). Histidine 155 acts as the Proton donor/acceptor in catalysis. Histidine 156 contributes to the (S)-2,3,4,5-tetrahydrodipicolinate binding site. Lysine 159 serves as the catalytic Proton donor. 165-166 (GT) is a binding site for (S)-2,3,4,5-tetrahydrodipicolinate.

The protein belongs to the DapB family.

It is found in the cytoplasm. The enzyme catalyses (S)-2,3,4,5-tetrahydrodipicolinate + NAD(+) + H2O = (2S,4S)-4-hydroxy-2,3,4,5-tetrahydrodipicolinate + NADH + H(+). It carries out the reaction (S)-2,3,4,5-tetrahydrodipicolinate + NADP(+) + H2O = (2S,4S)-4-hydroxy-2,3,4,5-tetrahydrodipicolinate + NADPH + H(+). It participates in amino-acid biosynthesis; L-lysine biosynthesis via DAP pathway; (S)-tetrahydrodipicolinate from L-aspartate: step 4/4. Catalyzes the conversion of 4-hydroxy-tetrahydrodipicolinate (HTPA) to tetrahydrodipicolinate. The chain is 4-hydroxy-tetrahydrodipicolinate reductase from Bacillus cereus (strain B4264).